The sequence spans 345 residues: Phosphoribosylformylglycinamidine cyclo-ligase (345 aa).

Belongs to the AIR synthase family.

The protein localises to the cytoplasm. It catalyses the reaction 2-formamido-N(1)-(5-O-phospho-beta-D-ribosyl)acetamidine + ATP = 5-amino-1-(5-phospho-beta-D-ribosyl)imidazole + ADP + phosphate + H(+). It functions in the pathway purine metabolism; IMP biosynthesis via de novo pathway; 5-amino-1-(5-phospho-D-ribosyl)imidazole from N(2)-formyl-N(1)-(5-phospho-D-ribosyl)glycinamide: step 2/2. In Aeromonas hydrophila subsp. hydrophila (strain ATCC 7966 / DSM 30187 / BCRC 13018 / CCUG 14551 / JCM 1027 / KCTC 2358 / NCIMB 9240 / NCTC 8049), this protein is Phosphoribosylformylglycinamidine cyclo-ligase.